The sequence spans 538 residues: Probable folate-biopterin transporter 9, chloroplastic (538 aa).

The transit peptide at 1 to 57 directs the protein to the chloroplast; it reads MNNPLLSISNPVKFFKPPIPYRISLNTTINKKQKHQSKTLVVKSNKRSTTSLTSSVS. 12 helical membrane-spanning segments follow: residues 85–105, 129–149, 152–172, 178–198, 220–240, 246–266, 309–329, 339–359, 370–390, 395–415, 447–467, and 479–499; these read VLLC…WLAL, LPMV…IGGA, VPYI…LAIF, VLPS…ITEV, ALMA…YCLL, ILFL…LSSK, LIWI…VFCY, SVIG…TVVY, ALIH…YILV, LAFG…AEIL, LCLS…MIGI, and ILIQ…VPML.

The protein belongs to the major facilitator superfamily. Folate-biopterin transporter (TC 2.A.71) family.

The protein localises to the plastid. Its subcellular location is the chloroplast membrane. Functionally, could mediate folate transport. This Arabidopsis thaliana (Mouse-ear cress) protein is Probable folate-biopterin transporter 9, chloroplastic.